The sequence spans 1294 residues: Phosphoribosylformylglycinamidine synthase (1294 aa).

The interval Trp-303 to Lys-325 is disordered. ATP-binding positions include Gly-305 to Asp-316, Thr-384 to Tyr-386, and Ala-676. Mg(2+) contacts are provided by Asp-677, Glu-716, Asn-720, and Asp-883. An ATP-binding site is contributed by Ser-885. The 254-residue stretch at Val-1041 to Gly-1294 folds into the Glutamine amidotransferase type-1 domain. The active-site Nucleophile is the Cys-1134. Active-site residues include His-1259 and Glu-1261.

It in the N-terminal section; belongs to the FGAMS family. As to quaternary structure, monomer.

The protein localises to the cytoplasm. The catalysed reaction is N(2)-formyl-N(1)-(5-phospho-beta-D-ribosyl)glycinamide + L-glutamine + ATP + H2O = 2-formamido-N(1)-(5-O-phospho-beta-D-ribosyl)acetamidine + L-glutamate + ADP + phosphate + H(+). The protein operates within purine metabolism; IMP biosynthesis via de novo pathway; 5-amino-1-(5-phospho-D-ribosyl)imidazole from N(2)-formyl-N(1)-(5-phospho-D-ribosyl)glycinamide: step 1/2. Its function is as follows. Phosphoribosylformylglycinamidine synthase involved in the purines biosynthetic pathway. Catalyzes the ATP-dependent conversion of formylglycinamide ribonucleotide (FGAR) and glutamine to yield formylglycinamidine ribonucleotide (FGAM) and glutamate. In Pectobacterium atrosepticum (strain SCRI 1043 / ATCC BAA-672) (Erwinia carotovora subsp. atroseptica), this protein is Phosphoribosylformylglycinamidine synthase.